Reading from the N-terminus, the 661-residue chain is Fusaric acid cluster transcription factor FUB12 (661 aa).

A DNA-binding region (zn(2)-C6 fungal-type) is located at residues 17-48 (CVPCRTRKIKCNAAVVGLPCGSCVSRECPDEC). 2 disordered regions span residues 56–132 (RTVK…PPGQ) and 151–184 (SAAQ…PQLD). Residues 73-98 (PDTNGSVLSPRQQQLPTNVSRQATDS) are compositionally biased toward polar residues. A compositionally biased stretch (basic and acidic residues) spans 99-109 (SHSDPVEESIH). Residues 110–119 (ASHTGSSLRN) are compositionally biased toward polar residues. Positions 120–129 (DTPHSRDRRP) are enriched in basic and acidic residues.

It is found in the nucleus. In terms of biological role, transcription factor that is involved in the formation of the two Fusaric acid derivatives, dehydrofusaric acid and fusarinolic acid, serving as a detoxification mechanism. This is Fusaric acid cluster transcription factor FUB12 from Gibberella moniliformis (strain M3125 / FGSC 7600) (Maize ear and stalk rot fungus).